The primary structure comprises 510 residues: D-alanine--D-alanyl carrier protein ligase (510 aa).

157-158 lines the ATP pocket; that stretch reads TS. Residue aspartate 202 participates in D-alanine binding. 297-302 contacts ATP; the sequence is NTYGPT. A D-alanine-binding site is contributed by valine 306. Residues aspartate 389 and lysine 498 each coordinate ATP. Residue lysine 498 coordinates D-alanine.

This sequence belongs to the ATP-dependent AMP-binding enzyme family. DltA subfamily.

Its subcellular location is the cytoplasm. It catalyses the reaction holo-[D-alanyl-carrier protein] + D-alanine + ATP = D-alanyl-[D-alanyl-carrier protein] + AMP + diphosphate. It functions in the pathway cell wall biogenesis; lipoteichoic acid biosynthesis. Its function is as follows. Catalyzes the first step in the D-alanylation of lipoteichoic acid (LTA), the activation of D-alanine and its transfer onto the D-alanyl carrier protein (Dcp) DltC. In an ATP-dependent two-step reaction, forms a high energy D-alanyl-AMP intermediate, followed by transfer of the D-alanyl residue as a thiol ester to the phosphopantheinyl prosthetic group of the Dcp. D-alanylation of LTA plays an important role in modulating the properties of the cell wall in Gram-positive bacteria, influencing the net charge of the cell wall. The sequence is that of D-alanine--D-alanyl carrier protein ligase from Listeria monocytogenes serotype 4a (strain HCC23).